A 132-amino-acid chain; its full sequence is 3-aminoacrylate deaminase RutC (132 aa).

This sequence belongs to the RutC family.

It catalyses the reaction (Z)-3-aminoacrylate + H2O + H(+) = 3-oxopropanoate + NH4(+). Functionally, involved in pyrimidine catabolism. Catalyzes the deamination of 3-aminoacrylate to malonic semialdehyde, a reaction that can also occur spontaneously. RutC may facilitate the reaction and modulate the metabolic fitness, rather than catalyzing essential functions. This Cronobacter turicensis (strain DSM 18703 / CCUG 55852 / LMG 23827 / z3032) protein is 3-aminoacrylate deaminase RutC.